Here is a 277-residue protein sequence, read N- to C-terminus: Sarcosine/dimethylglycine N-methyltransferase (277 aa).

It belongs to the methyltransferase superfamily. As to quaternary structure, monomer.

The enzyme catalyses sarcosine + 2 S-adenosyl-L-methionine = glycine betaine + 2 S-adenosyl-L-homocysteine + 2 H(+). It carries out the reaction sarcosine + S-adenosyl-L-methionine = N,N-dimethylglycine + S-adenosyl-L-homocysteine + H(+). It catalyses the reaction N,N-dimethylglycine + S-adenosyl-L-methionine = glycine betaine + S-adenosyl-L-homocysteine + H(+). Its pathway is amine and polyamine biosynthesis; betaine biosynthesis via glycine pathway; betaine from glycine: step 2/3. It participates in amine and polyamine biosynthesis; betaine biosynthesis via glycine pathway; betaine from glycine: step 3/3. Its activity is regulated as follows. Inhibited by n-butylic acid and S-adenosyl-L-homocysteine. Catalyzes the methylation of sarcosine and dimethylglycine to dimethylglycine and betaine, respectively, with S-adenosylmethionine (AdoMet) acting as the methyl donor. Activity with sarcosine is much weaker than activity with dimethylglycine. The protein is Sarcosine/dimethylglycine N-methyltransferase of Aphanothece halophytica.